The primary structure comprises 203 residues: Abscisic acid receptor PYL5 (203 aa).

The span at M1–H18 shows a compositional bias: polar residues. Residues M1 to P29 are disordered. Residues H51–N201 form an START-like region. Residues K87, A117–E122, R144–S150, and E166 each bind abscisate. The Gate loop signature appears at S113–A117. A Latch loop motif is present at residues H143–L145.

Belongs to the PYR/PYL/RCAR abscisic acid intracellular receptor family. As to quaternary structure, monomer. Homodimer. Binds ABA on one subunit only. Binds to CARs protein in an ABA-independent manner, both at the plasma membrane and in the nucleus. Binds both (-)-ABA and (+)-ABA. Interacts with HAB1, ABI1 and ABI2, and possibly with other PP2Cs.

Its subcellular location is the cytoplasm. It localises to the nucleus. The protein localises to the cell membrane. In terms of biological role, receptor for abscisic acid (ABA) required for ABA-mediated responses such as stomatal closure and germination inhibition. Inhibits the activity of group-A protein phosphatases type 2C (PP2Cs) in an ABA-independent manner but more efficiently when activated by ABA. Confers enhanced sensitivity to ABA. Can be activated by both (-)-ABA and (+)-ABA. This Arabidopsis thaliana (Mouse-ear cress) protein is Abscisic acid receptor PYL5 (PYL5).